Here is a 421-residue protein sequence, read N- to C-terminus: UDP-N-acetylglucosamine 1-carboxyvinyltransferase (421 aa).

Residue 22 to 23 participates in phosphoenolpyruvate binding; sequence KN. R95 serves as a coordination point for UDP-N-acetyl-alpha-D-glucosamine. C119 acts as the Proton donor in catalysis. C119 carries the post-translational modification 2-(S-cysteinyl)pyruvic acid O-phosphothioketal. Residues 124–128, D309, and I331 each bind UDP-N-acetyl-alpha-D-glucosamine; that span reads RPVDQ.

It belongs to the EPSP synthase family. MurA subfamily.

It is found in the cytoplasm. The enzyme catalyses phosphoenolpyruvate + UDP-N-acetyl-alpha-D-glucosamine = UDP-N-acetyl-3-O-(1-carboxyvinyl)-alpha-D-glucosamine + phosphate. Its pathway is cell wall biogenesis; peptidoglycan biosynthesis. Its function is as follows. Cell wall formation. Adds enolpyruvyl to UDP-N-acetylglucosamine. The sequence is that of UDP-N-acetylglucosamine 1-carboxyvinyltransferase from Leptothrix cholodnii (strain ATCC 51168 / LMG 8142 / SP-6) (Leptothrix discophora (strain SP-6)).